Consider the following 66-residue polypeptide: DNA-directed RNA polymerase subunit omega (66 aa).

Belongs to the RNA polymerase subunit omega family. The RNAP catalytic core consists of 2 alpha, 1 beta, 1 beta' and 1 omega subunit. When a sigma factor is associated with the core the holoenzyme is formed, which can initiate transcription.

It carries out the reaction RNA(n) + a ribonucleoside 5'-triphosphate = RNA(n+1) + diphosphate. Functionally, promotes RNA polymerase assembly. Latches the N- and C-terminal regions of the beta' subunit thereby facilitating its interaction with the beta and alpha subunits. The sequence is that of DNA-directed RNA polymerase subunit omega from Geobacillus kaustophilus (strain HTA426).